The primary structure comprises 778 residues: General transcription and DNA repair factor IIH helicase subunit XPD/RAD3 (778 aa).

In terms of domain architecture, Helicase ATP-binding spans 7–285; that stretch reads DLPVLFPYPK…KVDSQKLQDE (279 aa). An ATP-binding site is contributed by 42–49; that stretch reads MPSGTGKT. [4Fe-4S] cluster contacts are provided by C115, C133, C156, and C191. The short motif at 235–238 is the DEAH box element; the sequence is DEAH. A compositionally biased stretch (basic and acidic residues) spans 750 to 765; it reads SRKDQGGFIENENKEG. The disordered stretch occupies residues 750-778; sequence SRKDQGGFIENENKEGEQDEDEDEDIEMQ. Acidic residues predominate over residues 766–778; it reads EQDEDEDEDIEMQ.

It belongs to the helicase family. RAD3/XPD subfamily. Component of the 7-subunit TFIIH core complex composed of XPB/SSL2, XPD/RAD3, SSL1, TFB1, TFB2, TFB4 and TFB5, which is active in NER. The core complex associates with the 3-subunit CTD-kinase module TFIIK composed of CCL1, KIN28 and TFB3 to form the 10-subunit holoenzyme (holo-TFIIH) active in transcription. An additionnal subunit, TFB6, plays a role in the dissociation of the SSL2 helicase from TFIIH after transcription initiation. The cofactor is [4Fe-4S] cluster. It depends on Mg(2+) as a cofactor.

Its subcellular location is the nucleus. The enzyme catalyses Couples ATP hydrolysis with the unwinding of duplex DNA at the replication fork by translocating in the 5'-3' direction. This creates two antiparallel DNA single strands (ssDNA). The leading ssDNA polymer is the template for DNA polymerase III holoenzyme which synthesizes a continuous strand.. The catalysed reaction is ATP + H2O = ADP + phosphate + H(+). In terms of biological role, ATP-dependent 5'-3' DNA helicase. Component of the general transcription and DNA repair factor IIH (TFIIH) core complex, which is involved in general and transcription-coupled nucleotide excision repair (NER) of damaged DNA and, when complexed to TFIIK, in RNA transcription by RNA polymerase II. In NER, TFIIH acts by opening DNA around the lesion to allow the excision of the damaged oligonucleotide and its replacement by a new DNA fragment. The ATP-dependent helicase activity of XPD/RAD3 is required for DNA opening. In transcription, TFIIH has an essential role in transcription initiation. When the pre-initiation complex (PIC) has been established, TFIIH is required for promoter opening and promoter escape. Phosphorylation of the C-terminal tail (CTD) of the largest subunit of RNA polymerase II by the kinase module TFIIK controls the initiation of transcription. XPD/RAD3 acts by forming a bridge between TFIIK and the core-TFIIH complex. Involved in the maintenance of the fidelity of DNA replication. Has single-stranded DNA-dependent ATPase activity. 5'-3' DNA helicase activity requires ATP (dATP partially substitutes), will unwind over 800 bp dsDNA. Able to unwind an RNA:DNA hybrid. In Saccharomyces cerevisiae (strain ATCC 204508 / S288c) (Baker's yeast), this protein is General transcription and DNA repair factor IIH helicase subunit XPD/RAD3.